The chain runs to 220 residues: Type IV major pilin protein PilA (220 aa).

The propeptide at 1 to 12 is leader sequence; sequence MRVSRFNPRNRG. An N-methylphenylalanine modification is found at Phe13. A helical transmembrane segment spans residues 13–33; it reads FTLIELMIVVAIIGILAAIAI.

The protein belongs to the N-Me-Phe pilin family.

It is found in the fimbrium. The protein localises to the membrane. The two-component PilS2/PilR2 is required for proper assembly of T4P and regulation. In terms of biological role, major component of the type IV pili that are required for social gliding motility through cycles of extension and retraction. Extended pili are composed of thousands of copies of PilA and retract upon binding to extracellular polysaccharides and thereby pull the cell forward. This is Type IV major pilin protein PilA (pilA) from Myxococcus xanthus (strain DK1622).